Here is a 117-residue protein sequence, read N- to C-terminus: Minor capsid protein p17 (117 aa).

N-linked (GlcNAc...) asparagine; by host glycosylation is present at Asn12. The helical transmembrane segment at 39-59 (AIILGILILLVIILIVVAIVY) threads the bilayer. Residues Asn61 and Asn98 are each glycosylated (N-linked (GlcNAc...) asparagine; by host). The tract at residues 97 to 117 (KNSTTQQHIPSDEQLAELAHS) is disordered.

The protein belongs to the asfivirus minor capsid protein p17 family. In terms of assembly, interacts with the minor capsid protein M1249L and with the hexon capsid protein p72 capsomers; these interactions form a rigid zipper structure that stabilizes the capsomers. Interacts with host STING1.

It is found in the virion membrane. The protein resides in the host endoplasmic reticulum membrane. Functionally, together with the penton and the other minor capsid proteins (M1249L, p49), forms a complicated network immediately below the outer capsid shell, stabilizing the whole capsid. Three copies of p17 encircle each p72 capsomer in the inner capsid shell, anchoring p72 capsomers on the inner membrane. Required for the assembly of the capsid and icosahedral morphogenesis. Additionally, inhibits the host cGAS-STING pathway through its interaction with STING1 and subsequent interference of the recruitment of downstream components TBK1 and IKBKE. This Ornithodoros (relapsing fever ticks) protein is Minor capsid protein p17.